The sequence spans 166 residues: D-aminoacyl-tRNA deacylase (166 aa).

The short motif at 142-143 (GP) is the Gly-cisPro motif, important for rejection of L-amino acids element.

This sequence belongs to the DTD family. As to quaternary structure, homodimer.

The protein localises to the cytoplasm. It catalyses the reaction glycyl-tRNA(Ala) + H2O = tRNA(Ala) + glycine + H(+). It carries out the reaction a D-aminoacyl-tRNA + H2O = a tRNA + a D-alpha-amino acid + H(+). Its function is as follows. An aminoacyl-tRNA editing enzyme that deacylates mischarged D-aminoacyl-tRNAs. Also deacylates mischarged glycyl-tRNA(Ala), protecting cells against glycine mischarging by AlaRS. Acts via tRNA-based rather than protein-based catalysis; rejects L-amino acids rather than detecting D-amino acids in the active site. By recycling D-aminoacyl-tRNA to D-amino acids and free tRNA molecules, this enzyme counteracts the toxicity associated with the formation of D-aminoacyl-tRNA entities in vivo and helps enforce protein L-homochirality. The protein is D-aminoacyl-tRNA deacylase of Ralstonia nicotianae (strain ATCC BAA-1114 / GMI1000) (Ralstonia solanacearum).